The sequence spans 776 residues: Microtubule-associated protein tau (776 aa).

Basic and acidic residues predominate over residues 1-26 (MAEPRQEFEVMEDHAGTYGLGDRKDQ). Disordered stretches follow at residues 1 to 263 (MAEP…PAKG) and 276 to 591 (STEI…LKNV). Alanine 2 carries the N-acetylalanine modification. Phosphotyrosine is present on residues tyrosine 18 and tyrosine 29. A Glycyl lysine isopeptide (Lys-Gly) (interchain with G-Cter in ubiquitin) cross-link involves residue lysine 44. Serine 46 and serine 61 each carry phosphoserine. A compositionally biased stretch (polar residues) spans 61–71 (SETSDAKSTPT). Phosphothreonine occurs at positions 69, 71, and 111. 2 stretches are compositionally biased toward basic and acidic residues: residues 179 to 189 (EGGRHAPELLK) and 207 to 216 (GGKERPGSKE). Serine 214 carries the post-translational modification Phosphoserine. Positions 217–228 (EVDEDRDVDESS) are enriched in acidic residues. The span at 314–323 (EQAHSEEHLG) shows a compositional bias: basic and acidic residues. A compositionally biased stretch (low complexity) spans 324-340 (RAAFPGAPGEGPEARGP). Composition is skewed to basic and acidic residues over residues 344–356 (EDTK…ESSE) and 381–393 (KSKD…DKKA). Residues 440–452 (KYVSSVTPRTGSS) show a composition bias toward polar residues. The segment covering 455 to 466 (KEMKLKGADGKT) has biased composition (basic and acidic residues). The residue at position 470 (threonine 470) is a Phosphothreonine. The residue at position 472 (arginine 472) is an Omega-N-methylarginine. The residue at position 480 (lysine 480) is an N6,N6-dimethyllysine; alternate. An N6-acetyllysine; alternate modification is found at lysine 480. Phosphothreonine is present on residues threonine 486, threonine 492, and threonine 498. A phosphoserine mark is found at serine 502, serine 526, and serine 530. The segment covering 517-528 (RSERGEPPKSGD) has biased composition (basic and acidic residues). Over residues 529 to 549 (RSGYSSPGSPGTPGSRSRTPS) the composition is skewed to low complexity. Phosphotyrosine is present on tyrosine 532. Serine 533, serine 534, and serine 537 each carry phosphoserine. A phosphothreonine mark is found at threonine 540 and threonine 547. The residue at position 549 (serine 549) is a Phosphoserine. A Phosphothreonine modification is found at threonine 552. Position 560 is an N6-acetyllysine (lysine 560). Threonine 566 carries the phosphothreonine modification. Residues serine 570 and serine 572 each carry the phosphoserine modification. Tau/MAP repeat units follow at residues 579–609 (QTAP…GGGK), 610–640 (VQII…GGGS), 641–671 (VQIV…GGGQ), and 672–703 (VEVK…GGGN). Lysine 589 participates in a covalent cross-link: Glycyl lysine isopeptide (Lys-Gly) (interchain with G-Cter in ubiquitin). Residue lysine 594 is modified to N6-acetyllysine; alternate. Lysine 594 carries the post-translational modification N6-methyllysine; alternate. A Glycyl lysine isopeptide (Lys-Gly) (interchain with G-Cter in ubiquitin); alternate cross-link involves residue lysine 594. Serine 597 is modified (phosphoserine). Lysine 602 is covalently cross-linked (Glycyl lysine isopeptide (Lys-Gly) (interchain with G-Cter in ubiquitin)). Residue lysine 616 is modified to N6-acetyllysine; alternate. A Glycyl lysine isopeptide (Lys-Gly) (interchain with G-Cter in ubiquitin); alternate cross-link involves residue lysine 616. Phosphoserine is present on residues serine 620 and serine 624. At lysine 625 the chain carries N6-acetyllysine. The residue at position 628 (serine 628) is a Phosphoserine. The residue at position 633 (lysine 633) is an N6-acetyllysine; alternate. A Glycyl lysine isopeptide (Lys-Gly) (interchain with G-Cter in ubiquitin); alternate cross-link involves residue lysine 633. The residue at position 640 (serine 640) is a Phosphoserine. Lysine 646 carries the N6,N6-dimethyllysine; alternate modification. 3 positions are modified to N6-acetyllysine; alternate: lysine 646, lysine 652, and lysine 656. Residues lysine 646, lysine 652, and lysine 656 each participate in a glycyl lysine isopeptide (Lys-Gly) (interchain with G-Cter in ubiquitin); alternate cross-link. Residue serine 659 is modified to Phosphoserine. Residues lysine 666, lysine 678, and lysine 682 each carry the N6-acetyllysine; alternate modification. Glycyl lysine isopeptide (Lys-Gly) (interchain with G-Cter in ubiquitin); alternate cross-links involve residues lysine 666, lysine 678, and lysine 682. Arginine 684 is modified (omega-N-methylarginine). Residue serine 687 is modified to Phosphoserine. Lysine 688 participates in a covalent cross-link: Glycyl lysine isopeptide (Lys-Gly) (interchain with G-Cter in ubiquitin). Position 691 is a phosphoserine (serine 691). Lysine 704 bears the N6-acetyllysine; alternate mark. Lysine 704 is covalently cross-linked (Glycyl lysine isopeptide (Lys-Gly) (interchain with G-Cter in ubiquitin); alternate). Residue lysine 710 forms a Glycyl lysine isopeptide (Lys-Gly) (interchain with G-Cter in ubiquitin) linkage. Lysine 720 is modified (N6-acetyllysine; alternate). Residue lysine 720 forms a Glycyl lysine isopeptide (Lys-Gly) (interchain with G-Cter in ubiquitin); alternate linkage. Position 729 is a phosphotyrosine (tyrosine 729). 2 positions are modified to phosphoserine: serine 731 and serine 735. A disordered region spans residues 733 to 752 (VVSGDTSPRHLSNVSSTGSI). A compositionally biased stretch (polar residues) spans 736 to 751 (GDTSPRHLSNVSSTGS). The residue at position 738 (threonine 738) is a Phosphothreonine. Phosphoserine is present on residues serine 739, serine 744, serine 751, and serine 757. Threonine 762 carries the phosphothreonine modification.

As to quaternary structure, interacts with MARK1, MARK2, MARK3 and MARK4. Interacts with SQSTM1 when polyubiquitinated. Interacts with PSMC2 through SQSTM1. Interacts with FKBP4. Binds to CSNK1D. Interacts with SGK1. Interacts with EPM2A; the interaction dephosphorylates MAPT at Ser-396. Interacts with PIN1. Interacts with LRRK2. Interacts with LRP1, leading to endocytosis; this interaction is reduced in the presence of LRPAP1/RAP. Polyubiquitinated. Requires functional TRAF6 and may provoke SQSTM1-dependent degradation by the proteasome. Post-translationally, phosphorylation at various serine and threonine residues in S-P or T-P motifs by proline-directed protein kinases (PDPK1, CDK1, CDK5, GSK3, MAPK) (a few sites per protein in interphase, more in mitosis), and at serine residues in K-X-G-S motifs by MAP/microtubule affinity-regulating kinase (MARK1, MARK2, MARK3 or MARK4), causing detachment from microtubules, and their disassembly. Phosphorylation at Ser-597 by BRSK1 and BRSK2 in neurons affects ability to bind microtubules and plays a role in neuron polarization. Phosphorylation at Ser-214 by SGK1 mediates microtubule depolymerization and neurite formation in hippocampal neurons. Phosphorylated by PHK. Dephosphorylation at several serine and threonine residues by the serine/threonine phosphatase PPP5C.

Its subcellular location is the cytoplasm. The protein localises to the cytosol. The protein resides in the cell membrane. It is found in the cytoskeleton. It localises to the cell projection. Its subcellular location is the axon. The protein localises to the dendrite. In terms of biological role, promotes microtubule assembly and stability, and might be involved in the establishment and maintenance of neuronal polarity. The C-terminus binds axonal microtubules while the N-terminus binds neural plasma membrane components, suggesting that tau functions as a linker protein between both. Axonal polarity is predetermined by tau localization (in the neuronal cell) in the domain of the cell body defined by the centrosome. The short isoforms allow plasticity of the cytoskeleton whereas the longer isoforms may preferentially play a role in its stabilization. The polypeptide is Microtubule-associated protein tau (MAPT) (Gorilla gorilla gorilla (Western lowland gorilla)).